Consider the following 352-residue polypeptide: S-adenosylmethionine:tRNA ribosyltransferase-isomerase (352 aa).

This sequence belongs to the QueA family. As to quaternary structure, monomer.

It localises to the cytoplasm. It carries out the reaction 7-aminomethyl-7-carbaguanosine(34) in tRNA + S-adenosyl-L-methionine = epoxyqueuosine(34) in tRNA + adenine + L-methionine + 2 H(+). Its pathway is tRNA modification; tRNA-queuosine biosynthesis. Its function is as follows. Transfers and isomerizes the ribose moiety from AdoMet to the 7-aminomethyl group of 7-deazaguanine (preQ1-tRNA) to give epoxyqueuosine (oQ-tRNA). The protein is S-adenosylmethionine:tRNA ribosyltransferase-isomerase of Gloeobacter violaceus (strain ATCC 29082 / PCC 7421).